The sequence spans 197 residues: Imidazoleglycerol-phosphate dehydratase (197 aa).

The protein belongs to the imidazoleglycerol-phosphate dehydratase family.

The protein resides in the cytoplasm. The catalysed reaction is D-erythro-1-(imidazol-4-yl)glycerol 3-phosphate = 3-(imidazol-4-yl)-2-oxopropyl phosphate + H2O. The protein operates within amino-acid biosynthesis; L-histidine biosynthesis; L-histidine from 5-phospho-alpha-D-ribose 1-diphosphate: step 6/9. In Pseudomonas putida (strain ATCC 700007 / DSM 6899 / JCM 31910 / BCRC 17059 / LMG 24140 / F1), this protein is Imidazoleglycerol-phosphate dehydratase.